Here is a 149-residue protein sequence, read N- to C-terminus: Lipoprotein signal peptidase (149 aa).

The next 2 membrane-spanning stretches (helical) occupy residues 58–78 and 85–105; these read WFFI…LIRL and ASLA…DRAM. Catalysis depends on residues aspartate 111 and aspartate 127. A helical transmembrane segment spans residues 122-142; it reads IFNVADMAITIGVGILLLDVF.

Belongs to the peptidase A8 family.

It is found in the cell membrane. The enzyme catalyses Release of signal peptides from bacterial membrane prolipoproteins. Hydrolyzes -Xaa-Yaa-Zaa-|-(S,diacylglyceryl)Cys-, in which Xaa is hydrophobic (preferably Leu), and Yaa (Ala or Ser) and Zaa (Gly or Ala) have small, neutral side chains.. The protein operates within protein modification; lipoprotein biosynthesis (signal peptide cleavage). Its function is as follows. This protein specifically catalyzes the removal of signal peptides from prolipoproteins. This chain is Lipoprotein signal peptidase, found in Brevibacillus brevis (strain 47 / JCM 6285 / NBRC 100599).